Here is a 96-residue protein sequence, read N- to C-terminus: Co-chaperonin GroES (96 aa).

It belongs to the GroES chaperonin family. Heptamer of 7 subunits arranged in a ring. Interacts with the chaperonin GroEL.

It is found in the cytoplasm. Functionally, together with the chaperonin GroEL, plays an essential role in assisting protein folding. The GroEL-GroES system forms a nano-cage that allows encapsulation of the non-native substrate proteins and provides a physical environment optimized to promote and accelerate protein folding. GroES binds to the apical surface of the GroEL ring, thereby capping the opening of the GroEL channel. In Methylorubrum populi (strain ATCC BAA-705 / NCIMB 13946 / BJ001) (Methylobacterium populi), this protein is Co-chaperonin GroES.